The chain runs to 214 residues: MQLFHLCLIISCTCPTFQASKLCLGWLWGMDIDPYKEFGATVELLSFLPSDFFPSVRDLXDTASALYREALESPEHCSPHHTALRQAILCWGKLMTLATWVGNNLEDPASRDLVVNYVNTNMGLKIRQLLWFHISCLTFGRETVLEYLVSFGVWIRTPPAYRPPNAPILSTLPETTVVRRRDRGRSPRRRTPSPRRRRSQSPRRRRSQSRESQC.

Residues 1-19 (MQLFHLCLIISCTCPTFQA) form the signal peptide. The tract at residues 25 to 27 (GWL) is HBEAG. The segment at 165 to 214 (NAPILSTLPETTVVRRRDRGRSPRRRTPSPRRRRSQSPRRRRSQSRESQC) is disordered. Residues 178–207 (VRRRDRGRSPRRRTPSPRRRRSQSPRRRRS) are compositionally biased toward basic residues. A 1; half-length repeat occupies 186-192 (SPRRRTP). Positions 186–208 (SPRRRTPSPRRRRSQSPRRRRSQ) are 3 X 8 AA repeats of S-P-R-R-R-R-S-Q. A propeptide spanning residues 186-214 (SPRRRTPSPRRRRSQSPRRRRSQSRESQC) is cleaved from the precursor. A run of 2 repeats spans residues 193–200 (SPRRRRSQ) and 201–208 (SPRRRRSQ).

Belongs to the orthohepadnavirus precore antigen family. As to quaternary structure, homodimerizes. In terms of processing, phosphorylated. Post-translationally, cleaved by host furin.

The protein localises to the secreted. It is found in the host nucleus. Its function is as follows. May regulate immune response to the intracellular capsid in acting as a T-cell tolerogen, by having an immunoregulatory effect which prevents destruction of infected cells by cytotoxic T-cells. This immune regulation may predispose to chronicity during perinatal infections and prevent severe liver injury during adult infections. In Homo sapiens (Human), this protein is External core antigen.